The chain runs to 154 residues: Superoxide dismutase [Cu-Zn] (154 aa).

Cu cation is bound by residues His-47, His-49, and His-64. Cys-58 and Cys-147 are oxidised to a cystine. The Zn(2+) site is built by His-64, His-72, His-81, and Asp-84. His-121 is a binding site for Cu cation. Residues 126–137 are compositionally biased toward basic and acidic residues; the sequence is DLGRGGNEESKK. Residues 126 to 147 form a disordered region; the sequence is DLGRGGNEESKKTGNAGPRPAC.

Belongs to the Cu-Zn superoxide dismutase family. Homodimer. It depends on Cu cation as a cofactor. Requires Zn(2+) as cofactor.

It localises to the cytoplasm. The enzyme catalyses 2 superoxide + 2 H(+) = H2O2 + O2. In terms of biological role, destroys radicals which are normally produced within the cells and which are toxic to biological systems. Plays an important role in the phase transition, and may be important in vivo, as it would facilitate the intracellular survival of the fungus by providing a non-toxic environment in the macrophage phagolysosomes. In Talaromyces marneffei (Penicillium marneffei), this protein is Superoxide dismutase [Cu-Zn].